The following is a 212-amino-acid chain: Nascent polypeptide-associated complex subunit alpha-like protein 4 (212 aa).

Residues 25-35 (QKENDVVVEDV) show a composition bias toward basic and acidic residues. The interval 25–74 (QKENDVVVEDVKDGDEDDDDVDDDDDEIADGAGENEASKQSRSEKKSRKA) is disordered. Over residues 36 to 53 (KDGDEDDDDVDDDDDEIA) the composition is skewed to acidic residues. An NAC-A/B domain is found at 65 to 130 (SRSEKKSRKA…AKIDDMSSQL (66 aa)). The UBA domain maps to 173 to 210 (VEAKDIDLVMTQAGVSRPKAVKALKESNGDIVSAIMEL).

The protein belongs to the NAC-alpha family.

In terms of biological role, may promote appropriate targeting of ribosome-nascent polypeptide complexes. This is Nascent polypeptide-associated complex subunit alpha-like protein 4 from Arabidopsis thaliana (Mouse-ear cress).